The chain runs to 120 residues: Dense granule protein 5 (120 aa).

Residues 1–25 (MASVKRVVVAVMIVNVLALIFVGVA) form the signal peptide. The interval 27–59 (STRDVGSGGDDSEGARGREQQQVQQHEQNEDRS) is disordered. Residues 76–93 (AVGLAAAVVAVVSLLRLL) form a helical membrane-spanning segment. Over residues 100–109 (AIQEESKESA) the composition is skewed to basic and acidic residues. The segment at 100–120 (AIQEESKESATAEEEEVAEEE) is disordered. A compositionally biased stretch (acidic residues) spans 110-120 (TAEEEEVAEEE).

The protein resides in the secreted. It is found in the parasitophorous vacuole lumen. The protein localises to the parasitophorous vacuole membrane. Its subcellular location is the cytoplasmic vesicle. It localises to the secretory vesicle. Plays a role in the function of the cyst and parasitophorous vacuole membranes and therefore in host-parasite interactions. This Toxoplasma gondii protein is Dense granule protein 5 (GRA5).